A 179-amino-acid chain; its full sequence is Large ribosomal subunit protein uL5 (179 aa).

Belongs to the universal ribosomal protein uL5 family. Part of the 50S ribosomal subunit; part of the 5S rRNA/L5/L18/L25 subcomplex. Contacts the 5S rRNA and the P site tRNA. Forms a bridge to the 30S subunit in the 70S ribosome.

Functionally, this is one of the proteins that bind and probably mediate the attachment of the 5S RNA into the large ribosomal subunit, where it forms part of the central protuberance. In the 70S ribosome it contacts protein S13 of the 30S subunit (bridge B1b), connecting the 2 subunits; this bridge is implicated in subunit movement. Contacts the P site tRNA; the 5S rRNA and some of its associated proteins might help stabilize positioning of ribosome-bound tRNAs. The chain is Large ribosomal subunit protein uL5 from Geobacillus kaustophilus (strain HTA426).